A 1493-amino-acid chain; its full sequence is MKQSYAMDNPIVFFLLESNYFPMFSIFFNLLLLLVMFGSCVYKKRLGWENSDAFTNERFKDMSLTYNKLVVICCETLSALNSVLLLLSCFNLHKNGWDRSELMILLDLLFTALSWGAISFYIRSQFTYSHDQKFPILLRVWWVLYFMFSCYRLLVDIALYKKQELVSVHLLLSDVLAVSVGLFLCYSCLQKQGQGERINLLLEEPLLNGAESSAATSVQLDKAEDDEVVTPFSNAGFLSHVSFSWMSPLIVLGNEKIIDSEDVPQVDNSDRAEKLFWIFRSKLEWDDGERRITTYKLIKALFFSVWRDILLSTLFAFVYTVSCYVAPYLMDTFVQYLNGQRQYSNQGVVLVTTFFVAKLVECQARRNWYFRLQKAGIGMRSVLVSMIYEKGLTLPCYSKQGHTSGEIINLMTVDAERISAFSWYMHDPWILVLQISLALLILYRSLGLGSIAAFAATFLVMLGNIPLAKLEEKFQGNLMESKDNRMKKTSEALLNMRILKLQGWEMKFLHKILDLRGIEAGWLKKFVYNSAAISSVLWAAPSFVSATAFGACMLLKIPLESGKIIAALATFRILQTPIYKLPDTISMIVQTKVSLDRIATFLCLDDLQQDGMERLPSGSSKMDVEVSNGAFSWDDSSPIPTLKDIRFKIPHGMNIAICGTVGSGKSSLLSSILGEVPKISGNLKVCGRKAYIAQSPWIQSGKVEENILFGKPMQREWYQRVLEACSLNKDLEVFPFRDQTVIGERGINLSGGQKQRIQIARALYQDADIYLFDDPFSAVDAHTGSHLFKEVLLGLLRNKTVIYVTHQLEFLPEADLILVMKDGRITQAGKYNEILESGTDFMELVGAHTDALAAVDSYEKGSASAQSTTSKESKVSNDEEKQEEDLPSPKGQLVQEEEREKGKVGFTVYQKYMKLAYGGALVPIILVVQILFQVLNIGSNYWMAWVTPVSKDVKPLVSGSTLILVYVFLATASSFCILVRAMLSAMTGFKIATELFNQMHFRIFRASMSFFDATPIGRILNRASTDQSAVDLRLPSQFSNLAIAAVNILGIIGVMGQVAWQVLIVFIPVIAACTWYRQYYISAARELARLSGISRSPLVQHFSETLSGITTIRSFDQEPRFRTDIMRLNDCYSRLRFHAISAMEWLCFRLDLLSTVAFALSLVILVSVPEGVINPSFAGLAVTYALNLNSLQATLIWTLCDLENKMISVERMLQYIDIPSEPSLVIESTRPEKSWPCRGEITICNLQVRYGPHLPMVLRGLTCTFRGGLKTGIVGRTGCGKSTLIQTLFRIVEPAAGEIRIDGINILTIGLHDLRSRLSIIPQEPTMFEGTVRSNLDPLEEYADDQIWEALDKCQLGDEIRKKELKLDSPVSENGQNWSVGQRQLVCLGRVLLKRSKVLILDEATASVDTATDTLIQETLRQHFSGCTVITIAHRISSVIDSDMVLLLDQGLIEEHDSPARLLEDKSSSFSKLVAEYTASSDSRFKRSSMKTN.

Transmembrane regions (helical) follow at residues 21–41, 70–90, 102–122, 140–160, 165–185, 309–329, 343–360, 423–443, 448–468, and 535–555; these read FPMF…GSCV, VVIC…LSCF, LMIL…SFYI, VWWV…IALY, LVSV…LFLC, ILLS…APYL, YSNQ…AKLV, WYMH…LILY, LGSI…IPLA, and SVLW…CMLL. The region spanning 309–590 is the ABC transmembrane type-1 1 domain; it reads ILLSTLFAFV…LPDTISMIVQ (282 aa). Residues 624–847 form the ABC transporter 1 domain; the sequence is VEVSNGAFSW…GTDFMELVGA (224 aa). Residue 659–666 participates in ATP binding; sequence GTVGSGKS. Residues 863–898 are disordered; sequence ASAQSTTSKESKVSNDEEKQEEDLPSPKGQLVQEEE. Position 888 is a phosphoserine (S888). A run of 6 helical transmembrane segments spans residues 915–935, 959–979, 1038–1055, 1059–1081, 1153–1173, and 1177–1197; these read LAYG…FQVL, GSTL…CILV, FSNL…IGVM, AWQV…QYYI, LSTV…EGVI, and FAGL…TLIW. One can recognise an ABC transmembrane type-1 2 domain in the interval 922–1204; sequence VPIILVVQIL…LIWTLCDLEN (283 aa). One can recognise an ABC transporter 2 domain in the interval 1241-1475; the sequence is ITICNLQVRY…KSSSFSKLVA (235 aa). An ATP-binding site is contributed by 1275–1282; that stretch reads GRTGCGKS.

It belongs to the ABC transporter superfamily. ABCC family. Conjugate transporter (TC 3.A.1.208) subfamily. Ubiquitous.

It is found in the membrane. The catalysed reaction is ATP + H2O + xenobioticSide 1 = ADP + phosphate + xenobioticSide 2.. Functionally, pump for glutathione S-conjugates. This is ABC transporter C family member 7 (ABCC7) from Arabidopsis thaliana (Mouse-ear cress).